The primary structure comprises 185 residues: MALDKLLEQEAQSEIERIRAEARDRSQMIVAQAQERAQALIESRQRALETQRQAGIVRARSAADLDLNAARLTASESGMSQVYELVNQQITEITRVPEYRDILGRLIYQAREVITDAEAVEVNPAEAALARELVHDIAVRENPAIQGGVRVVARGGKSGITNTLAGRLERVRGELAPQVSRLLAE.

The protein belongs to the V-ATPase E subunit family.

Functionally, produces ATP from ADP in the presence of a proton gradient across the membrane. In Deinococcus deserti (strain DSM 17065 / CIP 109153 / LMG 22923 / VCD115), this protein is V-type proton ATPase subunit E.